A 991-amino-acid chain; its full sequence is MAGPVSLRELLMGASAWLGSESPGGPSAEGGGNAAGTPEPPWREDEICVVGIFGKTALRLNSEKFSLVNTVCDRQVFPLFHHQDPGDPGTGIKTKAVSVGEAGGAGDPGAAAGDSLRGGMATAEGNRAEPGPQDFSLLQAYYNQESKVLYLILTSICDNSQLLRACRALQSGEAGGGLSLPHAETHEFWKHQEKLQCLSLLYLFSVCHILLLVHPTCSFDITYDRVFRALDGLRQKVLPLLKTAIKDCPVGKDWKLNCRPCPPRLLFLFQLNGALKVEPPRSQDTAHPDKPKKHSPKRRLQHALEDQIYRIFRKSRVLTNQSINCLFTVPANQAFVYIVPGSQEEDPIGMLLDQLRSHCTVKDPESLLVPAPLSGPRRYQAMRQHSRQQLSFHIDSSTSSSSGQLVDFTLREFLWQHVELVLSKKGFDDSVGRNPQPSHFELPTYQKWISAAAKLYEVAIDGKEEDLGSPTGELTSKILSSIKVLEGFLDIDTKFSENRCQKALPMAHSAYQSNLPHNYTMTVHKNQLAQALRVYSQHARGPAFHKYAMQLHEDCYKFWSNGHQLCEERSLTDQHCVHKFHSLPKSGEKPEADRNPPVLYHNSRARSTGACNCGRKQAPRDDPFDIKAANYDFYQLLEEKCCGKLDHINFPVFEPSTPDPAPAKNEPSPAPPDSDAEKLKEKEPQTQGESTSLSLALSLGQSTDSLGTYPADPQAGGDNPEVHGQGEGKSEKRPNLVDRQASTVEYLPGMLHSNCPKGLLPKFSSWSLVKLGPAKSYNFHTGLDQQGFVPGTNYLMPWDIVIRTRAEDEGDLDTNSWPAPNKAIPGKRSAVVMGRGRRRDDIARAFVGFEYEDSRGRRFMCSGPDKVMKVMGSGPKESALKALNSDMPLYILSSSQGRGLKPHYAQLMRLFVVVPDAPLQIILMPQVQPGPPPCPVFYPEKQEITLPPDGLWVLRFPYAYVTERGPCFPPKENVQLMSYKVLRGVLKAVTQ.

Disordered regions lie at residues 18 to 41 (LGSE…PEPP), 100 to 129 (GEAG…NRAE), and 278 to 299 (EPPR…PKRR). S115 bears the Phosphoserine mark. Basic and acidic residues predominate over residues 278–289 (EPPRSQDTAHPD). Residues 290-299 (KPKKHSPKRR) are compositionally biased toward basic residues. Phosphoserine occurs at positions 469 and 668. The interval 653–738 (FEPSTPDPAP…KSEKRPNLVD (86 aa)) is disordered. Positions 675 to 684 (DAEKLKEKEP) are enriched in basic and acidic residues. Positions 685-706 (QTQGESTSLSLALSLGQSTDSL) are enriched in polar residues. The segment covering 720–736 (PEVHGQGEGKSEKRPNL) has biased composition (basic and acidic residues). A phosphoserine mark is found at S742 and S895. The residue at position 898 (R898) is an Omega-N-methylarginine.

It belongs to the SMG8 family. In terms of assembly, component of the SMG1C complex composed of SMG1, SMG8 and SMG9; the recruitment of SMG8 to SMG1 N-terminus induces a large conformational change in the SMG1 C-terminal head domain containing the catalytic domain. Forms heterodimers with SMG9; this assembly form may represent a SMG1C intermediate form. Post-translationally, phosphorylated by SMG1.

Functionally, involved in nonsense-mediated decay (NMD) of mRNAs containing premature stop codons. Is recruited by release factors to stalled ribosomes together with SMG1 and SMG9 (forming the SMG1C protein kinase complex) and, in the SMG1C complex, is required to mediate the recruitment of SMG1 to the ribosome:SURF complex and to suppress SMG1 kinase activity until the ribosome:SURF complex locates the exon junction complex (EJC). Acts as a regulator of kinase activity. The protein is Nonsense-mediated mRNA decay factor SMG8 (Smg8) of Mus musculus (Mouse).